We begin with the raw amino-acid sequence, 353 residues long: Ribosome biogenesis protein BRX1 homolog (353 aa).

The segment covering 1 to 10 (MAATKRKRRG) has biased composition (basic residues). The interval 1–46 (MAATKRKRRGGLAVQAKKLKRDAKDGKLPAKANDVSEEAAEEEKDR) is disordered. The 190-residue stretch at 60-249 (ERILIFSSRG…LIKIFQGSFG (190 aa)) folds into the Brix domain. Residue lysine 160 forms a Glycyl lysine isopeptide (Lys-Gly) (interchain with G-Cter in SUMO2) linkage. Phosphoserine is present on serine 261. The residue at position 276 (lysine 276) is an N6-acetyllysine. Residues lysine 314 and lysine 322 each participate in a glycyl lysine isopeptide (Lys-Gly) (interchain with G-Cter in SUMO2) cross-link.

It belongs to the BRX1 family.

The protein localises to the nucleus. It localises to the nucleolus. Its function is as follows. Required for biogenesis of the 60S ribosomal subunit. This chain is Ribosome biogenesis protein BRX1 homolog (BRIX1), found in Bos taurus (Bovine).